We begin with the raw amino-acid sequence, 345 residues long: UDP-N-acetylenolpyruvoylglucosamine reductase (345 aa).

Residues 25–193 (LPAHCTDFVS…VGVTFLLPKA (169 aa)) form the FAD-binding PCMH-type domain. Residue R169 is part of the active site. S237 serves as the catalytic Proton donor. E333 is a catalytic residue.

Belongs to the MurB family. FAD is required as a cofactor.

Its subcellular location is the cytoplasm. The enzyme catalyses UDP-N-acetyl-alpha-D-muramate + NADP(+) = UDP-N-acetyl-3-O-(1-carboxyvinyl)-alpha-D-glucosamine + NADPH + H(+). Its pathway is cell wall biogenesis; peptidoglycan biosynthesis. In terms of biological role, cell wall formation. In Pseudoalteromonas atlantica (strain T6c / ATCC BAA-1087), this protein is UDP-N-acetylenolpyruvoylglucosamine reductase.